A 426-amino-acid polypeptide reads, in one-letter code: MGIKTQKNFICLKRTFSMNLRDAISVANPVQLEEEIKHDEVVSFLKSKNLLDKPVILNVEGKKVAKNFVSSRETLGKYLGVDAYSIARELSKIEDREAEIRVEPFSSLAMKKVDVNLQELPVIKYFPRDGGRYITAGIVIAQRNGVYNASIHRMLLLDESRVAARLVPPRHTYLMWREAVEREEELEVAVVIGTHPLFLFASATRVPSGKEFSYAAGLMGRLTLYRKGEMLVPDSEIILFGRITAETAKEGPFVDITGTYDIVRDEPVIVFDEMYVKEDYIYYSITPAGKEHQMLMGVPYEPVIYRFVSNVCKVKNVITTPGSCHYFHCVVQIEKKSEGDGKNAIIAALAANPSMKGVVVVDDDIDILSYEDMEFAIATRFQPDRDLVVVKGARGSSLDPSADKTTSKWGIDATKPLGKEGFDRVV.

2 residues coordinate Mn(2+): Asn148 and Glu211. Asp255 acts as the Proton acceptor in catalysis.

The protein belongs to the UbiD family. The cofactor is prenylated FMN. Requires Mn(2+) as cofactor.

It catalyses the reaction (2E)-3-methyl-5-phosphooxypent-2-enoate + H(+) = isopentenyl phosphate + CO2. The protein operates within isoprenoid biosynthesis; isopentenyl diphosphate biosynthesis via mevalonate pathway. Its function is as follows. Catalyzes the conversion of trans-anhydromevalonate 5-phosphate (tAHMP) into isopentenyl phosphate. Involved in the archaeal mevalonate (MVA) pathway, which provides fundamental precursors for isoprenoid biosynthesis, such as isopentenyl diphosphate (IPP) and dimethylallyl diphosphate (DMAPP). The protein is Anhydromevalonate phosphate decarboxylase of Archaeoglobus fulgidus (strain ATCC 49558 / DSM 4304 / JCM 9628 / NBRC 100126 / VC-16).